The following is a 200-amino-acid chain: MAVKRPVRVLVDMDGVLADFESGLLQGFRRRFPEEPHVPLEQRRGFLANEQYGALRPDLAEKVASVYESPGFFLNLEPIPGALDALREMNDMKDTEVFICTTPLLKYDHCVGEKYRWVEQNLGPEFVERIILTRDKTVVMGDLLIDDKDNIQGLEETPSWEHILFTCCHNQHLALPPTRRRLLSWSDNWRGIIESKRASL.

The Nucleophile role is filled by Asp12. Positions 12 and 14 each coordinate Mg(2+). The active-site Proton donor is the Asp14. Phe20, Phe46, Tyr67, and Thr101 together coordinate substrate. Thr102 is subject to Phosphothreonine. Lys136 contributes to the substrate binding site. Asp147 is a binding site for Mg(2+). Ser184 carries the post-translational modification Phosphoserine.

This sequence belongs to the 5'(3')-deoxyribonucleotidase family. As to quaternary structure, homodimer. The cofactor is Mg(2+).

It localises to the cytoplasm. Dephosphorylates the 5' and 2'(3')-phosphates of deoxyribonucleotides, with a preference for dUMP and dTMP, intermediate activity towards dGMP, and low activity towards dCMP and dAMP. The polypeptide is 5'(3')-deoxyribonucleotidase, cytosolic type (Nt5c) (Mus musculus (Mouse)).